The sequence spans 177 residues: MASPATSSAVLVVVLVATLAAGGANAATFTITNRCSFTVWPAATPVGGGVQLSPGQTWTINVPAGTSSGRVWGRTGCSFDGSGRGSCATGDCAGALSCTLSGQKPLTLAEFTIGGSQDFYDLSVIDGYNVAMSFSCSSGVTVTCRDSRCPDAYLFPEDNTKTHACSGNSNYQVVFCP.

The signal sequence occupies residues 1-26 (MASPATSSAVLVVVLVATLAAGGANA).

Belongs to the thaumatin family.

It is found in the secreted. This Oryza sativa subsp. japonica (Rice) protein is Thaumatin-like protein.